A 1141-amino-acid polypeptide reads, in one-letter code: Myosin-binding protein C, fast-type (1141 aa).

Residues 1-62 (MPEAKPAAKK…VFLKKPDSVS (62 aa)) form a disordered region. The span at 13–39 (KGKDAPKGAPKEAPPKEAPAEAPKEAP) shows a compositional bias: basic and acidic residues. 5 consecutive Ig-like C2-type domains span residues 50 to 153 (PTGV…NIDV), 255 to 344 (SAAF…VKEP), 345 to 437 (PVLI…VEEK), 438 to 538 (QLEV…KQEP), and 539 to 638 (PKIH…VVDV). Fibronectin type-III domains follow at residues 641-737 (PPEA…IAPT) and 739-834 (EPLH…IREI). An Ig-like C2-type 6 domain is found at 838–932 (PKIRLPRHLR…ATIRIRVVEK (95 aa)). A Fibronectin type-III 3 domain is found at 935–1030 (PPINVMVKEV…SKNTARILKT (96 aa)). Residues 1048–1141 (PKFLTPLIDR…ECKLEVRVPQ (94 aa)) enclose the Ig-like C2-type 7 domain.

The protein belongs to the immunoglobulin superfamily. MyBP family.

In terms of biological role, thick filament-associated protein located in the crossbridge region of vertebrate striated muscle a bands. In vitro it binds MHC, F-actin and native thin filaments, and modifies the activity of actin-activated myosin ATPase. It may modulate muscle contraction or may play a more structural role. This chain is Myosin-binding protein C, fast-type (MYBPC2), found in Homo sapiens (Human).